We begin with the raw amino-acid sequence, 250 residues long: uncharacterized protein (250 aa).

The stretch at 165–208 (HLNLETANTKATEYQKNYQEELKQRQELRQKLLQERTQKMLEAL) forms a coiled coil. The segment covering 201-233 (TQKMLEALHQEETPEQDARDTAKKKTDQEEHTM) has biased composition (basic and acidic residues). The segment at 201–250 (TQKMLEALHQEETPEQDARDTAKKKTDQEEHTMRKANAPKTKASGEAPTP) is disordered.

This is an uncharacterized protein from Treponema pallidum (strain Nichols).